We begin with the raw amino-acid sequence, 336 residues long: MSRVTLSRYLIEQTRSHNTPADLRFLIEVVARACKEISHAVSKGALGGVLGSMGTENVQGEVQKKLDVMSNEILLEANEWAGNLAGMASEEMDHPYQIPGRYPKGAYLLVFDPLDGSSNIDVNVSVGTIFSVLRCPNEYLNQNDTLREEAFLQPGTTQVAAGYAIYGPQTMLMLTLGNGVKGFTLDRELGSFVLTHDNISVPESTAEFAINMSNQRHWEAPVKRYVEELLAGKEGPLGKNYNMRWIASMVADVHRILTRGGVFMYPRDAREPEKPGKLRLMYEANPMSFIIEQAGGAATNGTQRILDIKPENLHQRVAVFLGSKQEVERITGYHKE.

The Mg(2+) site is built by Glu-90, Asp-112, Leu-114, and Asp-115. Substrate is bound by residues Asp-115–Ser-118, Asn-211, and Lys-277. Glu-283 is a Mg(2+) binding site.

Belongs to the FBPase class 1 family. In terms of assembly, homotetramer. The cofactor is Mg(2+).

The protein resides in the cytoplasm. It catalyses the reaction beta-D-fructose 1,6-bisphosphate + H2O = beta-D-fructose 6-phosphate + phosphate. Its pathway is carbohydrate biosynthesis; gluconeogenesis. This is Fructose-1,6-bisphosphatase class 1 from Pseudomonas paraeruginosa (strain DSM 24068 / PA7) (Pseudomonas aeruginosa (strain PA7)).